The sequence spans 37 residues: U10-ctenitoxin-Co1a (37 aa).

4 disulfides stabilise this stretch: Cys-2-Cys-17, Cys-9-Cys-22, Cys-16-Cys-33, and Cys-24-Cys-31.

In terms of tissue distribution, expressed by the venom gland.

It localises to the secreted. Functionally, antagonist of L-type calcium channels (Cav1/CACNA1). This chain is U10-ctenitoxin-Co1a, found in Ctenus ornatus (Brazilian spider).